The chain runs to 301 residues: Tyrosine recombinase XerC (301 aa).

The Core-binding (CB) domain maps to 1-89 (MGLDGLAAYL…SWRQYCVWLV (89 aa)). Residues 110–290 (RVPKALPQEW…DFDHIARLYD (181 aa)) enclose the Tyr recombinase domain. Residues R151, K175, H242, R245, and H268 contribute to the active site. Y277 functions as the O-(3'-phospho-DNA)-tyrosine intermediate in the catalytic mechanism.

The protein belongs to the 'phage' integrase family. XerC subfamily. In terms of assembly, forms a cyclic heterotetrameric complex composed of two molecules of XerC and two molecules of XerD.

The protein localises to the cytoplasm. Functionally, site-specific tyrosine recombinase, which acts by catalyzing the cutting and rejoining of the recombining DNA molecules. The XerC-XerD complex is essential to convert dimers of the bacterial chromosome into monomers to permit their segregation at cell division. It also contributes to the segregational stability of plasmids. The chain is Tyrosine recombinase XerC from Neisseria meningitidis serogroup B (strain ATCC BAA-335 / MC58).